The primary structure comprises 519 residues: Histidine--tRNA ligase, cytoplasmic (519 aa).

Residues 135-137 (DLT), arginine 162, glutamine 178, aspartate 182, arginine 331, and 335-336 (YY) contribute to the L-histidine site.

The protein belongs to the class-II aminoacyl-tRNA synthetase family. As to quaternary structure, homodimer.

It localises to the cytoplasm. It catalyses the reaction tRNA(His) + L-histidine + ATP = L-histidyl-tRNA(His) + AMP + diphosphate + H(+). Its function is as follows. Catalyzes the ATP-dependent ligation of histidine to the 3'-end of its cognate tRNA, via the formation of an aminoacyl-adenylate intermediate (His-AMP). Plays a role in axon guidance. This is Histidine--tRNA ligase, cytoplasmic (hars1) from Takifugu rubripes (Japanese pufferfish).